The primary structure comprises 204 residues: Tat proofreading chaperone DmsD (204 aa).

Belongs to the TorD/DmsD family. DmsD subfamily. In terms of assembly, monomer in solution.

Its function is as follows. Required for biogenesis/assembly of DMSO reductase, but not for the interaction of the DmsA signal peptide with the Tat system. May be part of a chaperone cascade complex that facilitates a folding-maturation pathway for the substrate protein. The polypeptide is Tat proofreading chaperone DmsD (Salmonella typhimurium (strain LT2 / SGSC1412 / ATCC 700720)).